A 223-amino-acid polypeptide reads, in one-letter code: N-acetylmuramic acid 6-phosphate phosphatase (223 aa).

Aspartate 9 serves as the catalytic Nucleophile. Residues aspartate 9, aspartate 11, and aspartate 168 each contribute to the Mg(2+) site. Aspartate 11 serves as the catalytic Proton donor.

The protein belongs to the HAD-like hydrolase superfamily. CbbY/CbbZ/Gph/YieH family. Phosphatase MupP subfamily. It depends on Mg(2+) as a cofactor.

It carries out the reaction N-acetyl-D-muramate 6-phosphate + H2O = N-acetyl-D-muramate + phosphate. It functions in the pathway cell wall biogenesis; peptidoglycan recycling. Functionally, specifically catalyzes the dephosphorylation of N-acetylmuramate 6-phosphate (MurNAc-6P) to MurNac. Is involved in peptidoglycan recycling as part of a cell wall recycling pathway that bypasses de novo biosynthesis of the peptidoglycan precursor UDP-MurNAc. Plays a role in intrinsic resistance to fosfomycin, which targets the de novo synthesis of UDP-MurNAc. Shows a very low activity on GlcNAc-6P, and neither alpha-1-phosphorylated MurNAc, GlcNAc, or glucose nor glucosamine-6P or glucose-6P can be used as a substrate. The polypeptide is N-acetylmuramic acid 6-phosphate phosphatase (Pseudomonas putida (strain ATCC 47054 / DSM 6125 / CFBP 8728 / NCIMB 11950 / KT2440)).